The sequence spans 429 residues: MSKSLQAIRGMNDILPAQTPTWRYLESTFAQLLESYGYSEIRLPILEFTDLFARGIGEGTDVVDKEMYTFLDRNEESLTLRPEGTAGCVRAVLEHGMTGGGQVQKLWYTGPMFRYEKPQKGRYRQFHQIGVEVFNQPGPDIDAELIVLTARLWKQLGLADAVTLQLNSLGSSEARARYRDALVAYLQQRFEQLDEDSQRRLTTNPLRILDSKNAQTQALLTDAPTLHDYLDEESRAHFEGLKARLDAVGIAYEINPKLVRGLDYYGRTVFEWVTDKLGAQGTVCAGGRYDGLVSQFGGKPTPGVGFAMGVERLVLLLETLGLVPETLNPAPHAYICAFGEAAELAALALAERLRDELPGLRLLVNAGGGSFKSQFKKADKSGARYALILGDDELAGRVVGCKPLRDDSEQQSIAWDALPERLAACLEQV.

The protein belongs to the class-II aminoacyl-tRNA synthetase family. Homodimer.

It is found in the cytoplasm. The enzyme catalyses tRNA(His) + L-histidine + ATP = L-histidyl-tRNA(His) + AMP + diphosphate + H(+). The polypeptide is Histidine--tRNA ligase (Stutzerimonas stutzeri (strain A1501) (Pseudomonas stutzeri)).